The chain runs to 134 residues: Fluoride-specific ion channel FluC 2 (134 aa).

4 consecutive transmembrane segments (helical) span residues 8-28, 40-60, 69-89, and 99-119; these read IVAIGIGGAIGTSFRFLLNTW, IENIVGSFLLGFLTSWFLVIV, LGVGLCGGFTTMSTLAADSVL, and LIYVAASLFGGIGFALLGYLL. Gly75 and Thr78 together coordinate Na(+).

The protein belongs to the fluoride channel Fluc/FEX (TC 1.A.43) family.

It localises to the cell membrane. The enzyme catalyses fluoride(in) = fluoride(out). With respect to regulation, na(+) is not transported, but it plays an essential structural role and its presence is essential for fluoride channel function. Functionally, fluoride-specific ion channel. Important for reducing fluoride concentration in the cell, thus reducing its toxicity. This is Fluoride-specific ion channel FluC 2 from Halalkalibacterium halodurans (strain ATCC BAA-125 / DSM 18197 / FERM 7344 / JCM 9153 / C-125) (Bacillus halodurans).